The following is a 709-amino-acid chain: DNA helicase/primase complex-associated protein (709 aa).

Residues 141–176 form a disordered region; it reads SGDDGRDQQPPPVDGFGSEMEGEQTCPHAQRHSESP.

The protein belongs to the herpesviridae HEPA family. As to quaternary structure, associates with the primase and the helicase to form the helicase-primase complex. Interacts with the origin-binding protein. Interacts with the polymerase catalytic subunit.

It is found in the host nucleus. Its function is as follows. Component of the helicase/primase complex. Unwinds the DNA at the replication forks and generates single-stranded DNA for both leading and lagging strand synthesis. The primase synthesizes short RNA primers on the lagging strand that the polymerase presumably elongates using dNTPs. The primase-associated factor has no known catalytic activity in the complex and may serve to facilitate the formation of the replisome by directly interacting with the origin-binding protein and the polymerase. This Epstein-Barr virus (strain B95-8) (HHV-4) protein is DNA helicase/primase complex-associated protein.